Consider the following 35-residue polypeptide: MEVNILAFVATALFILIPTAFLLILYIQTAAQNNG.

Residues 5–25 traverse the membrane as a helical segment; that stretch reads ILAFVATALFILIPTAFLLIL.

The protein belongs to the PsbM family. In terms of assembly, PSII is composed of 1 copy each of membrane proteins PsbA, PsbB, PsbC, PsbD, PsbE, PsbF, PsbH, PsbI, PsbJ, PsbK, PsbL, PsbM, PsbT, PsbX, PsbY, PsbZ, Psb30/Ycf12, at least 3 peripheral proteins of the oxygen-evolving complex and a large number of cofactors. It forms dimeric complexes.

The protein localises to the plastid. Its subcellular location is the chloroplast thylakoid membrane. In terms of biological role, one of the components of the core complex of photosystem II (PSII). PSII is a light-driven water:plastoquinone oxidoreductase that uses light energy to abstract electrons from H(2)O, generating O(2) and a proton gradient subsequently used for ATP formation. It consists of a core antenna complex that captures photons, and an electron transfer chain that converts photonic excitation into a charge separation. This subunit is found at the monomer-monomer interface. This Adiantum capillus-veneris (Maidenhair fern) protein is Photosystem II reaction center protein M.